A 105-amino-acid polypeptide reads, in one-letter code: uncharacterized protein (105 aa).

2 consecutive transmembrane segments (helical) span residues 56–76 (ALIWSRKAIMRLIGLVVVLII) and 85–105 (INLNPYLVWVITTLILMGVFY).

The protein localises to the membrane. This is an uncharacterized protein from Aedes vexans (Inland floodwater mosquito).